The primary structure comprises 273 residues: Urease accessory protein UreD (273 aa).

The protein belongs to the UreD family. UreD, UreF and UreG form a complex that acts as a GTP-hydrolysis-dependent molecular chaperone, activating the urease apoprotein by helping to assemble the nickel containing metallocenter of UreC. The UreE protein probably delivers the nickel.

Its subcellular location is the cytoplasm. Required for maturation of urease via the functional incorporation of the urease nickel metallocenter. The chain is Urease accessory protein UreD from Bacillus cereus (strain ATCC 10987 / NRS 248).